The chain runs to 398 residues: Cell division protein FtsZ (398 aa).

GTP is bound by residues 24–28, 111–113, E154, R158, and D202; these read GAGGN and GTG. The tract at residues 333-381 is disordered; it reads GRNNKSETSPISQSEDSEKEKFKWPYSQSESTQDKTLETKPAEQVSEGA. The segment covering 364–373 has biased composition (basic and acidic residues); that stretch reads TQDKTLETKP.

Belongs to the FtsZ family. Homodimer. Polymerizes to form a dynamic ring structure in a strictly GTP-dependent manner. Interacts directly with several other division proteins.

It is found in the cytoplasm. Essential cell division protein that forms a contractile ring structure (Z ring) at the future cell division site. The regulation of the ring assembly controls the timing and the location of cell division. One of the functions of the FtsZ ring is to recruit other cell division proteins to the septum to produce a new cell wall between the dividing cells. Binds GTP and shows GTPase activity. This is Cell division protein FtsZ from Wolbachia sp.